A 296-amino-acid chain; its full sequence is tRNA uridine(34) hydroxylase (296 aa).

A Rhodanese domain is found at 121 to 215 (AQPDVAVIDT…YLEDIPQDQS (95 aa)). Cys-175 functions as the Cysteine persulfide intermediate in the catalytic mechanism.

The protein belongs to the TrhO family.

The catalysed reaction is uridine(34) in tRNA + AH2 + O2 = 5-hydroxyuridine(34) in tRNA + A + H2O. In terms of biological role, catalyzes oxygen-dependent 5-hydroxyuridine (ho5U) modification at position 34 in tRNAs. This Roseobacter denitrificans (strain ATCC 33942 / OCh 114) (Erythrobacter sp. (strain OCh 114)) protein is tRNA uridine(34) hydroxylase.